Consider the following 283-residue polypeptide: Ribonuclease P protein subunit p38 (283 aa).

At alanine 2 the chain carries N-acetylalanine. Phosphoserine occurs at positions 12, 226, and 235.

It belongs to the eukaryotic ribosomal protein eL8 family. As to quaternary structure, component of nuclear RNase P and RNase MRP ribonucleoproteins. RNase P consists of a catalytic RNA moiety and about 10 protein subunits; POP1, POP4, POP5, POP7, RPP14, RPP21, RPP25, RPP30, RPP38 and RPP40. Within the RNase P complex, POP1, POP7 and RPP25 form the 'finger' subcomplex, POP5, RPP14, RPP40 and homodimeric RPP30 form the 'palm' subcomplex, and RPP21, POP4 and RPP38 form the 'wrist' subcomplex. All subunits of the RNase P complex interact with the catalytic RNA. Several subunits of RNase P are also part of the RNase MRP complex. RNase MRP consists of a catalytic RNA moiety and about 8 protein subunits; POP1, POP7, RPP25, RPP30, RPP38, RPP40 and possibly also POP4 and POP5.

It is found in the nucleus. It localises to the nucleolus. Component of ribonuclease P, a ribonucleoprotein complex that generates mature tRNA molecules by cleaving their 5'-ends. Also a component of the MRP ribonuclease complex, which cleaves pre-rRNA sequences. In Homo sapiens (Human), this protein is Ribonuclease P protein subunit p38 (RPP38).